The chain runs to 493 residues: Glycerol kinase (493 aa).

Thr-11 provides a ligand contact to ADP. The ATP site is built by Thr-11, Thr-12, and Ser-13. Position 11 (Thr-11) interacts with sn-glycerol 3-phosphate. Arg-15 is a binding site for ADP. Sn-glycerol 3-phosphate-binding residues include Arg-80, Glu-81, Tyr-132, and Asp-241. 5 residues coordinate glycerol: Arg-80, Glu-81, Tyr-132, Asp-241, and Gln-242. Residues Thr-263 and Gly-306 each contribute to the ADP site. ATP-binding residues include Thr-263, Gly-306, Gln-310, and Gly-408. Gly-408 contributes to the ADP binding site.

This sequence belongs to the FGGY kinase family.

The catalysed reaction is glycerol + ATP = sn-glycerol 3-phosphate + ADP + H(+). Its pathway is polyol metabolism; glycerol degradation via glycerol kinase pathway; sn-glycerol 3-phosphate from glycerol: step 1/1. Its activity is regulated as follows. Inhibited by fructose 1,6-bisphosphate (FBP). In terms of biological role, key enzyme in the regulation of glycerol uptake and metabolism. Catalyzes the phosphorylation of glycerol to yield sn-glycerol 3-phosphate. The sequence is that of Glycerol kinase from Cereibacter sphaeroides (strain KD131 / KCTC 12085) (Rhodobacter sphaeroides).